Consider the following 367-residue polypeptide: Zinc metalloproteinase nas-22 (367 aa).

The N-terminal stretch at 1 to 16 (MKSFFILLSILQECYG) is a signal peptide. The Peptidase M12A domain occupies 41-237 (VLIRGSDEER…LMINKYYECS (197 aa)). 2 N-linked (GlcNAc...) asparagine glycosylation sites follow: N56 and N85. 4 disulfides stabilise this stretch: C88-C236, C111-C130, C238-C258, and C260-C269. H138 serves as a coordination point for Zn(2+). E139 is a catalytic residue. The Zn(2+) site is built by H142 and H148. 3 N-linked (GlcNAc...) asparagine glycosylation sites follow: N169, N241, and N254. The region spanning 232–270 (KYYECSCANNLSCKNHGYPNPSNCSQCNCPYGFGGADCS) is the EGF-like domain. N-linked (GlcNAc...) asparagine glycans are attached at residues N287 and N322.

Requires Zn(2+) as cofactor. As to expression, expressed in uterine seam (utse) cell.

The protein resides in the secreted. Metalloprotease. In Caenorhabditis elegans, this protein is Zinc metalloproteinase nas-22 (nas-22).